The sequence spans 143 residues: Large ribosomal subunit protein uL13 (143 aa).

Belongs to the universal ribosomal protein uL13 family. As to quaternary structure, part of the 50S ribosomal subunit.

Functionally, this protein is one of the early assembly proteins of the 50S ribosomal subunit, although it is not seen to bind rRNA by itself. It is important during the early stages of 50S assembly. The sequence is that of Large ribosomal subunit protein uL13 from Desulfitobacterium hafniense (strain Y51).